We begin with the raw amino-acid sequence, 126 residues long: MKTIDLFAGCGGMSLGFMQAGFEIVAAVDNWRPAITTYQQNFIHPIHELDLAEVDEAISLIKTYSPELIIGGPPCQDFSSAGKRDEGLGRANLTLDFVKIVLAIQPAWVIMENVERARLSKIHQQA.

Positions 1–126 constitute an SAM-dependent MTase C5-type domain; the sequence is MKTIDLFAGC…ARLSKIHQQA (126 aa). Cysteine 75 is an active-site residue.

The protein belongs to the class I-like SAM-binding methyltransferase superfamily. C5-methyltransferase family.

The enzyme catalyses a 2'-deoxycytidine in DNA + S-adenosyl-L-methionine = a 5-methyl-2'-deoxycytidine in DNA + S-adenosyl-L-homocysteine + H(+). In terms of biological role, a methylase, recognizes the double-stranded sequence 5'-GRCGYC-3', methylates C-? on both strands, and protects the DNA from cleavage by the HgiEI endonuclease. This is Type II methyltransferase M.HgiGI from Herpetosiphon aurantiacus (Herpetosiphon giganteus).